A 190-amino-acid polypeptide reads, in one-letter code: Xanthine phosphoribosyltransferase 2 (190 aa).

Positions 20 and 27 each coordinate xanthine. Position 129-133 (129-133 (ANGCA)) interacts with 5-phospho-alpha-D-ribose 1-diphosphate. Lys-157 lines the xanthine pocket.

Belongs to the purine/pyrimidine phosphoribosyltransferase family. Xpt subfamily. As to quaternary structure, homodimer.

It localises to the cytoplasm. It catalyses the reaction XMP + diphosphate = xanthine + 5-phospho-alpha-D-ribose 1-diphosphate. Its pathway is purine metabolism; XMP biosynthesis via salvage pathway; XMP from xanthine: step 1/1. In terms of biological role, converts the preformed base xanthine, a product of nucleic acid breakdown, to xanthosine 5'-monophosphate (XMP), so it can be reused for RNA or DNA synthesis. This Clostridium botulinum (strain ATCC 19397 / Type A) protein is Xanthine phosphoribosyltransferase 2.